The primary structure comprises 546 residues: Probable Dol-P-Man:Man(7)GlcNAc(2)-PP-Dol alpha-1,6-mannosyltransferase (546 aa).

Transmembrane regions (helical) follow at residues 5–25, 67–87, 113–133, 166–186, 200–220, 258–278, 283–303, 305–325, and 340–360; these read ESICWYLANILLVTCIGYYSY, FIPSLFIAVLSYIPSWFVNPL, FGTLSGALFILFSCAQFHLVY, ILVFAAAIVRSEIALLLMCLI, LLLVGISSSLAAVGASFLIDS, LPWLFLNPTTLLFLLISFVYI, LLIYVPLFFIFVYSFLGHKEW, FIIYSIPWFNAASAIGASLCF, and LMFFSGIIFGFIGSSFLLYVF.

Belongs to the glycosyltransferase 22 family.

It is found in the endoplasmic reticulum membrane. The catalysed reaction is an alpha-D-Man-(1-&gt;2)-alpha-D-Man-(1-&gt;2)-alpha-D-Man-(1-&gt;3)-[alpha-D-Man-(1-&gt;2)-alpha-D-Man-(1-&gt;3)-alpha-D-Man-(1-&gt;6)]-beta-D-Man-(1-&gt;4)-beta-D-GlcNAc-(1-&gt;4)-alpha-D-GlcNAc-diphospho-di-trans,poly-cis-dolichol + a di-trans,poly-cis-dolichyl beta-D-mannosyl phosphate = an alpha-D-Man-(1-&gt;2)-alpha-D-Man-(1-&gt;2)-alpha-D-Man-(1-&gt;3)-[alpha-D-Man-(1-&gt;2)-alpha-D-Man-(1-&gt;3)-[alpha-D-Man-(1-&gt;6)]-alpha-D-Man-(1-&gt;6)]-beta-D-Man-(1-&gt;4)-beta-D-GlcNAc-(1-&gt;4)-alpha-D-GlcNAc-diphospho-di-trans,poly-cis-dolichol + a di-trans,poly-cis-dolichyl phosphate + H(+). It participates in protein modification; protein glycosylation. Mannosyltransferase that operates in the biosynthetic pathway of dolichol-linked oligosaccharides, the glycan precursors employed in protein asparagine (N)-glycosylation. The assembly of dolichol-linked oligosaccharides begins on the cytosolic side of the endoplasmic reticulum membrane and finishes in its lumen. The sequential addition of sugars to dolichol pyrophosphate produces dolichol-linked oligosaccharides containing fourteen sugars, including two GlcNAcs, nine mannoses and three glucoses. Once assembled, the oligosaccharide is transferred from the lipid to nascent proteins by oligosaccharyltransferases. In the lumen of the endoplasmic reticulum, adds the eighth mannose residue in an alpha-1,6 linkage onto Man(7)GlcNAc(2)-PP-dolichol to produce Man(8)GlcNAc(2)-PP-dolichol. In Schizosaccharomyces pombe (strain 972 / ATCC 24843) (Fission yeast), this protein is Probable Dol-P-Man:Man(7)GlcNAc(2)-PP-Dol alpha-1,6-mannosyltransferase (alg12).